Here is a 463-residue protein sequence, read N- to C-terminus: NADH dehydrogenase [ubiquinone] iron-sulfur protein 2, mitochondrial (463 aa).

A mitochondrion-targeting transit peptide spans 1-33 (MAALRVLCGLRGVAAQVLRPGAGVRLPIQPSRG). The residue at position 62 (K62) is an N6-acetyllysine. R118 is subject to Symmetric dimethylarginine. [4Fe-4S] cluster contacts are provided by C326, C332, and C347.

The protein belongs to the complex I 49 kDa subunit family. As to quaternary structure, core subunit of respiratory chain NADH dehydrogenase (Complex I) which is composed of 45 different subunits. Component of the iron-sulfur (IP) fragment of the enzyme. Interacts with NDUFAF3. Interacts with NDUFAF7. Interacts with CERS2. [4Fe-4S] cluster serves as cofactor. Dimethylation at Arg-118 by NDUFAF7 takes place after NDUFS2 assembles into the complex I, leading to stabilize the early intermediate complex.

Its subcellular location is the mitochondrion inner membrane. It carries out the reaction a ubiquinone + NADH + 5 H(+)(in) = a ubiquinol + NAD(+) + 4 H(+)(out). Functionally, core subunit of the mitochondrial membrane respiratory chain NADH dehydrogenase (Complex I) which catalyzes electron transfer from NADH through the respiratory chain, using ubiquinone as an electron acceptor. Essential for the catalytic activity and assembly of complex I. Redox-sensitive, critical component of the oxygen-sensing pathway in the pulmonary vasculature which plays a key role in acute pulmonary oxygen-sensing and hypoxic pulmonary vasoconstriction. Plays an important role in carotid body sensing of hypoxia. Essential for glia-like neural stem and progenitor cell proliferation, differentiation and subsequent oligodendrocyte or neuronal maturation. This chain is NADH dehydrogenase [ubiquinone] iron-sulfur protein 2, mitochondrial (NDUFS2), found in Gorilla gorilla gorilla (Western lowland gorilla).